The chain runs to 182 residues: Dirigent protein 1 (182 aa).

A signal peptide spans M1–A24. An N-linked (GlcNAc...) asparagine glycan is attached at N125.

The protein belongs to the plant dirigent protein family. Homodimer.

It localises to the secreted. The protein resides in the extracellular space. The protein localises to the apoplast. In terms of biological role, dirigent proteins impart stereoselectivity on the phenoxy radical-coupling reaction, yielding optically active lignans from two molecules of coniferyl alcohol in the biosynthesis of lignans, flavonolignans, and alkaloids and thus plays a central role in plant secondary metabolism. The protein is Dirigent protein 1 (DIR1) of Arabidopsis thaliana (Mouse-ear cress).